A 248-amino-acid chain; its full sequence is Ribonuclease PH (248 aa).

Phosphate-binding positions include arginine 86 and glycine 124 to arginine 126.

Belongs to the RNase PH family. As to quaternary structure, homohexameric ring arranged as a trimer of dimers.

The catalysed reaction is tRNA(n+1) + phosphate = tRNA(n) + a ribonucleoside 5'-diphosphate. Its function is as follows. Phosphorolytic 3'-5' exoribonuclease that plays an important role in tRNA 3'-end maturation. Removes nucleotide residues following the 3'-CCA terminus of tRNAs; can also add nucleotides to the ends of RNA molecules by using nucleoside diphosphates as substrates, but this may not be physiologically important. Probably plays a role in initiation of 16S rRNA degradation (leading to ribosome degradation) during starvation. The polypeptide is Ribonuclease PH (Listeria welshimeri serovar 6b (strain ATCC 35897 / DSM 20650 / CCUG 15529 / CIP 8149 / NCTC 11857 / SLCC 5334 / V8)).